Here is a 184-residue protein sequence, read N- to C-terminus: Photosystem I assembly protein Ycf4 (184 aa).

A run of 2 helical transmembrane segments spans residues 22-42 (FCWAIILFLGSLGFLLIGISS) and 57-77 (ILFFPQGIVMSFYGLAGLFIS).

This sequence belongs to the Ycf4 family.

Its subcellular location is the plastid. It localises to the chloroplast thylakoid membrane. Its function is as follows. Seems to be required for the assembly of the photosystem I complex. The chain is Photosystem I assembly protein Ycf4 from Populus trichocarpa (Western balsam poplar).